Reading from the N-terminus, the 459-residue chain is Smoothelin-like protein 1 (459 aa).

Polar residues predominate over residues 1-27 (MEQTEGNSSEDGTTVSPTAGNLETPGS). Positions 1 to 314 (MEQTEGNSSE…RPRGPRAQNR (314 aa)) are disordered. Composition is skewed to basic and acidic residues over residues 42-55 (SDKE…EHLC), 75-105 (DELK…KEDT), 112-168 (DTGK…KEDA), 185-211 (ADVK…KELV), and 221-232 (EQGKENESEERA). Residues 124–154 (NEVREKEEAMLASEKQKVDEKETNLESKEKS) are a coiled coil. Positions 260–283 (PESTGETSPSASESSPSEVPGSPT) are enriched in low complexity. Basic and acidic residues predominate over residues 287-300 (PSEKKKDRAPERRV). Ser-301 bears the Phosphoserine; by PKA and PKG mark. Residues 343 to 449 (GGVKNMLLEW…YIQELYRSLV (107 aa)) form the Calponin-homology (CH) domain. The segment at 441–459 (IQELYRSLVQKGLVKTKKK) is calmodulin-binding.

The protein belongs to the smoothelin family. As to quaternary structure, interacts with PPP1R12A. Maximal phosphorylation of Ser-301 correlates with maximal relaxation of aorta in response to acetylcholine. As to expression, widely expressed, with highest expression in skeletal muscles (at protein level). Within striated muscles, significantly more expressed in soleus muscle compared with plantaris muscle or white vastus (at protein level). 30-40% lower expression in females than in males (at protein level). Expressed in type 2a fibers, but not detected in fast twitch type 2b muscle white vastus nor in oxidative type I/b heart muscle (at protein level). Expressed within myometrial cells of the uterus, as well as in the endometrial layer. In the aorta, confined to smooth muscle cells. Not detected in endothelial cells.

The protein resides in the cytoplasm. The protein localises to the myofibril. Its subcellular location is the sarcomere. It localises to the i band. It is found in the m line. The protein resides in the nucleus. Its function is as follows. Plays a role in the regulation of contractile properties of both striated and smooth muscles. When unphosphorylated, may inhibit myosin dephosphorylation. Phosphorylation at Ser-301 reduces this inhibitory activity. This Mus musculus (Mouse) protein is Smoothelin-like protein 1 (Smtnl1).